The sequence spans 754 residues: Peptidyl-prolyl cis-trans isomerase G (754 aa).

Residues F11–E176 enclose the PPIase cyclophilin-type domain. A compositionally biased stretch (basic residues) spans K182–S193. The tract at residues K182–G754 is disordered. Over residues S194–S216 the composition is skewed to low complexity. Positions K228 to K253 are enriched in basic residues. S254, S256, S257, S259, and S290 each carry phosphoserine. A compositionally biased stretch (basic and acidic residues) spans P292 to C310. Residue S315 is modified to Phosphoserine. Positions S329–S347 are enriched in basic residues. Composition is skewed to basic and acidic residues over residues R348 to R368 and R379 to K449. S356 carries the phosphoserine modification. The residue at position 358 (T358) is a Phosphothreonine. A Phosphoserine modification is found at S386. A Glycyl lysine isopeptide (Lys-Gly) (interchain with G-Cter in SUMO2) cross-link involves residue K392. 3 positions are modified to phosphoserine: S397, S413, and S415. The segment covering N450–S462 has biased composition (basic residues). Composition is skewed to basic and acidic residues over residues K463–K553 and R578–R599. Positions S616–D627 are enriched in basic residues. Residues S628–Q686 show a composition bias toward basic and acidic residues. 2 positions are modified to phosphoserine: S687 and S690. The segment covering S687–D698 has biased composition (polar residues). K693 is covalently cross-linked (Glycyl lysine isopeptide (Lys-Gly) (interchain with G-Cter in SUMO2)). S696, S744, and S745 each carry phosphoserine. A compositionally biased stretch (basic and acidic residues) spans K707–G754. At T748 the chain carries Phosphothreonine. A Phosphoserine modification is found at S753.

As to quaternary structure, interacts with CLK1, PNN and with the phosphorylated C-terminal domain of RNA polymerase II. Ubiquitous.

It is found in the nucleus matrix. The protein resides in the nucleus speckle. It catalyses the reaction [protein]-peptidylproline (omega=180) = [protein]-peptidylproline (omega=0). Inhibited by cyclosporin A (CsA). Functionally, PPIase that catalyzes the cis-trans isomerization of proline imidic peptide bonds in oligopeptides and may therefore assist protein folding. May be implicated in the folding, transport, and assembly of proteins. May play an important role in the regulation of pre-mRNA splicing. The chain is Peptidyl-prolyl cis-trans isomerase G (PPIG) from Homo sapiens (Human).